The following is a 129-amino-acid chain: Methylmalonyl-CoA decarboxylase subunit gamma (129 aa).

Composition is skewed to low complexity over residues 24–39 (APAA…APAP) and 49–58 (PAAAAAPVPA). The disordered stretch occupies residues 24–58 (APAAAPKAAPAAAPAPKAAPAPAPAPAAAAAPVPA). Positions 51–129 (AAAAPVPAGA…STGDDMVVLG (79 aa)) constitute a Biotinyl-binding domain. N6-biotinyllysine is present on Lys-95.

In terms of assembly, the methylmalonyl-CoA decarboxylase is composed of five subunits: the carboxyltransferase alpha subunit (MmdA), the tunnel beta subunit (MmdB), the biotin-containing gamma subunit (MmdC), and the delta (MmdD) and epsilon (MmdE) subunits. Requires biotin as cofactor.

The protein resides in the cell membrane. It catalyses the reaction (S)-methylmalonyl-CoA + Na(+)(in) + H(+)(out) = propanoyl-CoA + Na(+)(out) + CO2. Completely inhibited by avidin. Biotin-containing subunit of the sodium ion pump methylmalonyl-CoA decarboxylase, which converts the chemical energy of a decarboxylation reaction into an electrochemical gradient of Na(+) ions across the cytoplasmic membrane, thereby creating a sodium ion motive force that is used for ATP synthesis. Can also convert malonyl-CoA into acetyl-CoA. This chain is Methylmalonyl-CoA decarboxylase subunit gamma, found in Veillonella parvula (Staphylococcus parvulus).